Reading from the N-terminus, the 225-residue chain is Uracil-DNA glycosylase (225 aa).

The active-site Proton acceptor is Asp65.

Belongs to the uracil-DNA glycosylase (UDG) superfamily. UNG family.

The protein resides in the cytoplasm. It carries out the reaction Hydrolyzes single-stranded DNA or mismatched double-stranded DNA and polynucleotides, releasing free uracil.. Its function is as follows. Excises uracil residues from the DNA which can arise as a result of misincorporation of dUMP residues by DNA polymerase or due to deamination of cytosine. The sequence is that of Uracil-DNA glycosylase from Clostridium perfringens (strain ATCC 13124 / DSM 756 / JCM 1290 / NCIMB 6125 / NCTC 8237 / Type A).